Reading from the N-terminus, the 330-residue chain is Poly(3-hydroxyalkanoate) polymerase subunit PhaE (330 aa).

Residues 298–328 (RSEVDEIHQTIYQLRKEVKSLKKRLGETEAN) adopt a coiled-coil conformation.

The protein belongs to the PHA/PHB synthase family. Type III PhaE subfamily. Forms a heterodimer with PhaC, which may multimerize in the presence of 3-hydroxybutyryl-CoA. Both subunits are required for PHB synthesis in E.coli and in PHA-negative A.eutrophus.

The protein localises to the cytoplasm. It participates in biopolymer metabolism; poly-(R)-3-hydroxybutanoate biosynthesis. In terms of biological role, when expressed in E.coli with Synechocystis PhaC and C.necator PhaA and PhaB, confers the ability to synthesize up to 13% (w/w) poly(3-hydroxybutyrate) (PHB) depending on the carbon source; all 4 genes are necessary for PHB production. Cell-free in vitro coexpression with PhaE gives a heterodimer able to polymerize 3-hydroxybutyrate-CoA. This subunit has no catalytic activity but enhances the activity of PhaC, the catalytic subunit. This is Poly(3-hydroxyalkanoate) polymerase subunit PhaE from Synechocystis sp. (strain ATCC 27184 / PCC 6803 / Kazusa).